A 131-amino-acid chain; its full sequence is Nuclear envelope phosphatase-regulatory subunit 1 homolog (131 aa).

A run of 2 helical transmembrane segments spans residues 33 to 53 (LLAVVLSAMSMCTAISAWYWL) and 68 to 88 (WIHPVFTVATLTLVVLFILGI).

The protein belongs to the CNEP1R1 family.

It localises to the nucleus membrane. It is found in the cytoplasm. Functionally, may form with the serine/threonine protein phosphatase l(1)G0269 an active complex dephosphorylating and activating lipin-like phosphatases. Lipins are phosphatidate phosphatases that catalyze the conversion of phosphatidic acid to diacylglycerol and control the metabolism of fatty acids at different levels. This Drosophila melanogaster (Fruit fly) protein is Nuclear envelope phosphatase-regulatory subunit 1 homolog.